Consider the following 269-residue polypeptide: Phosphonoacetaldehyde hydrolase (269 aa).

Asp10 serves as the catalytic Nucleophile. Asp10 and Ala12 together coordinate Mg(2+). Lys52 serves as the catalytic Schiff-base intermediate with substrate. Asp186 is a Mg(2+) binding site.

This sequence belongs to the HAD-like hydrolase superfamily. PhnX family. Homodimer. It depends on Mg(2+) as a cofactor.

The enzyme catalyses phosphonoacetaldehyde + H2O = acetaldehyde + phosphate + H(+). Involved in phosphonate degradation. This Salmonella agona (strain SL483) protein is Phosphonoacetaldehyde hydrolase.